The chain runs to 315 residues: Ankyrin repeat domain-containing protein 54 (315 aa).

The interval 1 to 49 (MDGSSPLLAAAGSDGDRSSSEGEYTLAGGPSAGDTEKREGESPMEAAGA) is disordered. 4 ANK repeats span residues 124–153 (HAVKRLREAANSNDIDTVRRLLEDDTDPCA), 157–186 (KGRTALHFSSCNGNETIVQLLLSYGADPNQ), 190–219 (LGNTPLHLAACTNHVPVITTLLRGGARVDA), and 223–255 (AGRTPLHLARSKLNILQEGDSRSLETLRGEVTQ).

Its subcellular location is the nucleus. It is found in the cytoplasm. The protein localises to the midbody. Functionally, plays an important role in regulating intracellular signaling events associated with erythroid terminal differentiation. In Danio rerio (Zebrafish), this protein is Ankyrin repeat domain-containing protein 54 (ankrd54).